The primary structure comprises 248 residues: MTTSNRILLGVNIDHVATLRQARGTRYPDPVKAALDAEEAGADGITVHLREDRRHIQERDVLLLKDVLQTRMNFEMGVTEEMMAFAERIRPAHICLVPETRQELTTEGGLDVAGQEARIKAAVERLSKIGSEVSLFIDADERQIEASKRVGAPAIELHTGRYADAQTPSEVAEELQRIVDGVAVGLAQGLIVNAGHGLHYHNVEAVAAIKGINELNIGHALVAHALFVGFKGAVAEMKALILAAAAKA.

A 3-amino-2-oxopropyl phosphate-binding site is contributed by N12. A 1-deoxy-D-xylulose 5-phosphate-binding site is contributed by 14-15; the sequence is DH. R23 is a binding site for 3-amino-2-oxopropyl phosphate. Residue H48 is the Proton acceptor of the active site. The 1-deoxy-D-xylulose 5-phosphate site is built by R50 and H55. The active-site Proton acceptor is E75. T105 is a 1-deoxy-D-xylulose 5-phosphate binding site. H196 functions as the Proton donor in the catalytic mechanism. 3-amino-2-oxopropyl phosphate contacts are provided by residues G197 and 218–219; that span reads GH.

The protein belongs to the PNP synthase family. As to quaternary structure, homooctamer; tetramer of dimers.

It localises to the cytoplasm. The enzyme catalyses 3-amino-2-oxopropyl phosphate + 1-deoxy-D-xylulose 5-phosphate = pyridoxine 5'-phosphate + phosphate + 2 H2O + H(+). The protein operates within cofactor biosynthesis; pyridoxine 5'-phosphate biosynthesis; pyridoxine 5'-phosphate from D-erythrose 4-phosphate: step 5/5. In terms of biological role, catalyzes the complicated ring closure reaction between the two acyclic compounds 1-deoxy-D-xylulose-5-phosphate (DXP) and 3-amino-2-oxopropyl phosphate (1-amino-acetone-3-phosphate or AAP) to form pyridoxine 5'-phosphate (PNP) and inorganic phosphate. The chain is Pyridoxine 5'-phosphate synthase from Pseudomonas fluorescens (strain ATCC BAA-477 / NRRL B-23932 / Pf-5).